A 734-amino-acid chain; its full sequence is Terpene cyclase/mutase ntnI (734 aa).

Residues 1–12 (MQSHIGQWTSTA) are compositionally biased toward polar residues. Residues 1-26 (MQSHIGQWTSTAKGHLSRDENGDEKT) form a disordered region. Positions 16 to 26 (LSRDENGDEKT) are enriched in basic and acidic residues. PFTB repeat units lie at residues 130-172 (AIEI…RLLG), 493-534 (LHNA…SGKT), 570-610 (RTRG…ALAG), and 619-668 (SRKG…GLMH).

The protein belongs to the terpene cyclase/mutase family.

It functions in the pathway secondary metabolite biosynthesis; terpenoid biosynthesis. Terpene cyclase/mutase; part of the gene cluster that mediates the biosynthesis of the meroterpenoids nectripenoids A and B, as well as cochliquninone D and isocochliquninone E. The pathway probably begins with the HR-PKS ntnH that catalyzes two chain-extension steps to form a reduced triketide, which then primes the SAT domain in the NR-PKS ntnG to initiate three more cycles of extension to give a linear hexaketide corresponding to the polyketide part of nectripenoids. The FAD-dependent monooxygenase ntnJ then performs an oxidative decarboxylation at C11 of the ntnH/ntnG product, via an electrophilic aromatic hydroxylation with concomitant ipso-decarboxylation. The membrane-bound polyprenyl transferase ntnF then introduces a farnesyl group before the FAD-dependent monooxygenase ntnK functions as the first epoxidase on terminal C12'-C13' olefin, followed by a second epoxidation on C7'-C8' catalyzed by ntnA. The terpene cyclase/mutase ntnI then initiates the sequential tricyclic ring formation through protonation of the terminal epoxide and catalyzes the regioselective and stereoselective 6/6/6-tricyclic ring formation. The cytochrome P450 monooxygenase ntnM may then hydroxylate C1'. The protein is Terpene cyclase/mutase ntnI of Nectria sp.